The sequence spans 169 residues: Photosystem I assembly protein Ycf3 (169 aa).

TPR repeat units lie at residues 35–68 (AFTYYRDGMSAQSEGEYAEALQNYYEAMRLETDP), 72–105 (SYILYNIGLVHTSNGEHTKALEYYFQALERNPSL), and 120–153 (GEQAIRQGDPETAEAWFDQAAEYWEQAIALAPGN).

It belongs to the Ycf3 family.

It is found in the plastid. Its subcellular location is the chloroplast thylakoid membrane. Functionally, essential for the assembly of the photosystem I (PSI) complex. May act as a chaperone-like factor to guide the assembly of the PSI subunits. This Pinus koraiensis (Korean pine) protein is Photosystem I assembly protein Ycf3.